Here is a 510-residue protein sequence, read N- to C-terminus: Protein phosphatase 1H (510 aa).

The 431-residue stretch at 73 to 503 folds into the PPM-type phosphatase domain; the sequence is STGYAEVINA…DDISVYVIPL (431 aa). Disordered regions lie at residues 105-128 and 188-225; these read VQST…EGLQ and LGEE…PTRF.

The protein belongs to the PP2C family.

It is found in the nucleus. The protein resides in the cytoplasm. It carries out the reaction O-phospho-L-seryl-[protein] + H2O = L-seryl-[protein] + phosphate. The catalysed reaction is O-phospho-L-threonyl-[protein] + H2O = L-threonyl-[protein] + phosphate. This chain is Protein phosphatase 1H (ppm1h), found in Xenopus tropicalis (Western clawed frog).